The primary structure comprises 170 residues: Protein-lysine myristoyltransferase HlyC (170 aa).

Active-site residues include H23 and D92. A heme-binding site is contributed by H151.

The protein belongs to the RTX toxin acyltransferase family. In terms of assembly, monomer. In terms of processing, proteolytically cleaved by the protease systems ClpAP, ClpXP and FtsH, leading to its degradation.

The protein resides in the cytoplasm. The catalysed reaction is tetradecanoyl-[ACP] + L-lysyl-[protein] = N(6)-tetradecanoyl-L-lysyl-[protein] + holo-[ACP] + H(+). With respect to regulation, the acyltransferase activity is inhibited by heme. In terms of biological role, protein-lysine myristoyltransferase that catalyzes myristoylation of the protoxin (HlyA) at two internal lysine residues, thereby converting it to the active toxin. This is Protein-lysine myristoyltransferase HlyC from Escherichia coli.